The primary structure comprises 205 residues: Large ribosomal subunit protein uL4 (205 aa).

A disordered region spans residues 43 to 77 (RRRSGTASTKGRSDVAGSRAKLFRQKGTGRARRGD). Positions 63 to 73 (KLFRQKGTGRA) are enriched in basic residues.

Belongs to the universal ribosomal protein uL4 family. In terms of assembly, part of the 50S ribosomal subunit.

Its function is as follows. One of the primary rRNA binding proteins, this protein initially binds near the 5'-end of the 23S rRNA. It is important during the early stages of 50S assembly. It makes multiple contacts with different domains of the 23S rRNA in the assembled 50S subunit and ribosome. In terms of biological role, forms part of the polypeptide exit tunnel. The sequence is that of Large ribosomal subunit protein uL4 from Desulfosudis oleivorans (strain DSM 6200 / JCM 39069 / Hxd3) (Desulfococcus oleovorans).